The following is a 525-amino-acid chain: NAD(P)H-quinone oxidoreductase chain 4-2 (525 aa).

Helical transmembrane passes span 6 to 26 (FPWLTTIILLPIAASLLIPII), 36 to 56 (WYALTVGLIDFALIVYAFYTS), 91 to 111 (LIILTGFITTLATLAAWPVTL), 115 to 135 (LFYFLLLAMYGGQIAVFAVQD), 137 to 157 (LLFFLVWELELIPVYLLLAIW), 169 to 189 (FILYTAGGSLFILLASLTMAF), 212 to 232 (LLLYAGFLIAYAIKLPIIPLH), 243 to 263 (TAPAHMLLAGILLKMGGYALI), 277 to 297 (FAPVLVVLGVVNIIYAALTSF), 314 to 334 (MGFVIIGFASFTDLGLSGAVL), 335 to 355 (QMVSHGLIGASLFFLVGATYD), 375 to 397 (IFAMFTACSMASLALPGMSGFVA), 417 to 437 (VIVVFLMAVGVILTPIYLLSM), and 464 to 484 (VFVIACLLVPIIGIGFYPKLL).

It belongs to the complex I subunit 4 family.

It is found in the cellular thylakoid membrane. It carries out the reaction a plastoquinone + NADH + (n+1) H(+)(in) = a plastoquinol + NAD(+) + n H(+)(out). The catalysed reaction is a plastoquinone + NADPH + (n+1) H(+)(in) = a plastoquinol + NADP(+) + n H(+)(out). Its function is as follows. NDH-1 shuttles electrons from NAD(P)H, via FMN and iron-sulfur (Fe-S) centers, to quinones in the respiratory chain. The immediate electron acceptor for the enzyme in this species is believed to be plastoquinone. Couples the redox reaction to proton translocation (for every two electrons transferred, four hydrogen ions are translocated across the cytoplasmic membrane), and thus conserves the redox energy in a proton gradient. This Nostoc sp. (strain PCC 7120 / SAG 25.82 / UTEX 2576) protein is NAD(P)H-quinone oxidoreductase chain 4-2 (ndhD2).